The primary structure comprises 305 residues: Methionyl-tRNA formyltransferase (305 aa).

110 to 113 (SLLP) contributes to the (6S)-5,6,7,8-tetrahydrofolate binding site.

It belongs to the Fmt family.

The enzyme catalyses L-methionyl-tRNA(fMet) + (6R)-10-formyltetrahydrofolate = N-formyl-L-methionyl-tRNA(fMet) + (6S)-5,6,7,8-tetrahydrofolate + H(+). Functionally, attaches a formyl group to the free amino group of methionyl-tRNA(fMet). The formyl group appears to play a dual role in the initiator identity of N-formylmethionyl-tRNA by promoting its recognition by IF2 and preventing the misappropriation of this tRNA by the elongation apparatus. The protein is Methionyl-tRNA formyltransferase of Ureaplasma urealyticum serovar 10 (strain ATCC 33699 / Western).